Consider the following 499-residue polypeptide: Lysine--tRNA ligase (499 aa).

Residues E407 and E414 each contribute to the Mg(2+) site.

Belongs to the class-II aminoacyl-tRNA synthetase family. As to quaternary structure, homodimer. Mg(2+) serves as cofactor.

It localises to the cytoplasm. The catalysed reaction is tRNA(Lys) + L-lysine + ATP = L-lysyl-tRNA(Lys) + AMP + diphosphate. The polypeptide is Lysine--tRNA ligase (Lactiplantibacillus plantarum (strain ATCC BAA-793 / NCIMB 8826 / WCFS1) (Lactobacillus plantarum)).